The following is a 1013-amino-acid chain: Putative DNA polymerase 060R (1013 aa).

It belongs to the DNA polymerase type-B family.

The catalysed reaction is DNA(n) + a 2'-deoxyribonucleoside 5'-triphosphate = DNA(n+1) + diphosphate. Its function is as follows. DNA-directed DNA polymerase involved in viral DNA replication. The polypeptide is Putative DNA polymerase 060R (Dryophytes versicolor (chameleon treefrog)).